A 361-amino-acid chain; its full sequence is Queuine tRNA-ribosyltransferase (361 aa).

Asp92 functions as the Proton acceptor in the catalytic mechanism. Substrate is bound by residues 92–96, Asp146, Gln189, and Gly216; that span reads DSGGF. The tract at residues 247–253 is RNA binding; sequence GVGKPAD. The active-site Nucleophile is Asp266. The interval 271–275 is RNA binding; important for wobble base 34 recognition; the sequence is TRAGR. Zn(2+) contacts are provided by Cys304, Cys306, Cys309, and His335.

It belongs to the queuine tRNA-ribosyltransferase family. Homodimer. Within each dimer, one monomer is responsible for RNA recognition and catalysis, while the other monomer binds to the replacement base PreQ1. Zn(2+) serves as cofactor.

The catalysed reaction is 7-aminomethyl-7-carbaguanine + guanosine(34) in tRNA = 7-aminomethyl-7-carbaguanosine(34) in tRNA + guanine. Its pathway is tRNA modification; tRNA-queuosine biosynthesis. Functionally, catalyzes the base-exchange of a guanine (G) residue with the queuine precursor 7-aminomethyl-7-deazaguanine (PreQ1) at position 34 (anticodon wobble position) in tRNAs with GU(N) anticodons (tRNA-Asp, -Asn, -His and -Tyr). Catalysis occurs through a double-displacement mechanism. The nucleophile active site attacks the C1' of nucleotide 34 to detach the guanine base from the RNA, forming a covalent enzyme-RNA intermediate. The proton acceptor active site deprotonates the incoming PreQ1, allowing a nucleophilic attack on the C1' of the ribose to form the product. After dissociation, two additional enzymatic reactions on the tRNA convert PreQ1 to queuine (Q), resulting in the hypermodified nucleoside queuosine (7-(((4,5-cis-dihydroxy-2-cyclopenten-1-yl)amino)methyl)-7-deazaguanosine). This Rickettsia massiliae (strain Mtu5) protein is Queuine tRNA-ribosyltransferase.